The following is a 1119-amino-acid chain: Transcriptional repressor NF-X1 homolog (1119 aa).

Positions 1 to 214 (MADTEGTSSS…EPLTEEETKI (214 aa)) are disordered. The segment covering 7 to 17 (TSSSIPTSTNS) has biased composition (low complexity). Residues 18 to 29 (SRHRASRGRGGR) show a composition bias toward basic residues. Residues 84 to 98 (ANFTFNPNAATFNPA) show a composition bias toward low complexity. Residues 113–128 (GASTHSNQNSRQQEPS) are compositionally biased toward polar residues. A compositionally biased stretch (basic and acidic residues) spans 143 to 154 (RQLEIQEQRGDS). Residues 157 to 167 (QNQSRQNNRNQ) are compositionally biased toward low complexity. Positions 174-193 (ANQQNKSVQNPSRNPGNSRR) are enriched in polar residues. Over residues 198 to 214 (RRREQKEEPLTEEETKI) the composition is skewed to basic and acidic residues. The RING-type; degenerate zinc-finger motif lies at 235-287 (CAICYTRITTRQGVWSCKTCYHIFHISTGCITDWARSSRDKEGANTWRCPTCQ). NF-X1-type zinc fingers lie at residues 330–348 (CPHPCTELCHPGPCIECKL), 383–402 (CGQHNCERICHSGDCGECTV), 439–458 (CGIHHCTKKCHDKECGECET), 500–523 (CGTPGKNHHCREKCHEGPCPPCNL), 565–584 (CGMHKCQEVCCIQDEHFCLQ), 592–611 (CGIHTCENVCHAGQCRPCLQ), 649–668 (CDHSVSHKCHGEQNCPPCTQ), 703–726 (CGVHVCQRTCHGEECEKEGEKCTK), and 735–756 (CEHPCALPCHEDSPCEPSPCKA). One can recognise an R3H domain in the interval 867–937 (IDFVKSVEKI…KRSIVLTAVR (71 aa)). Disordered regions lie at residues 1024-1047 (VDSDDEESNVPTTSNLVSSPPKDW) and 1078-1119 (AAKK…ELLE). Positions 1032–1041 (NVPTTSNLVS) are enriched in polar residues. The span at 1086-1097 (PTWEDQCDEDAP) shows a compositional bias: acidic residues.

This sequence belongs to the NFX1 family.

It is found in the nucleus. Functionally, may play a role in transcription regulation. This Caenorhabditis elegans protein is Transcriptional repressor NF-X1 homolog (nfx-1).